A 564-amino-acid chain; its full sequence is Protein glycosylation K (564 aa).

At 1 to 15 (MLKKLFFILSKEDKN) the chain is on the cytoplasmic side. A helical membrane pass occupies residues 16–38 (FLFFLLVFSVFISFIETFAISLV). The 303-residue stretch at 17-319 (LFFLLVFSVF…IITSYHDLLY (303 aa)) folds into the ABC transmembrane type-1 domain. Residues 39 to 76 (MPFITLASDFSYFDRNKYLISLKEYLNIPVFEIIVYFG) are Extracellular-facing. Residues 46 to 67 (SDFSYFDRNKYLISLKEYLNIP) form an important for stimulation of ATPase activity by lipid-linked oligosaccharides and subsequent translocation of lipid-linked oligosaccharides region. Residues 77–98 (VGLIVFYVFRALLNAYYFHLLA) traverse the membrane as a helical segment. Residues 99 to 149 (RFSKGRYHAIAYKVFSKFLNINYEKFTQKNQSEILKSITGEVYNLSTMISS) are Cytoplasmic-facing. The helical transmembrane segment at 150–170 (FLLLMSEIFVVLLLYALMLLI) threads the bilayer. At 171–173 (NYK) the chain is on the extracellular side. Residues 174-197 (ITLFLSIFMVLNAFILVKILSPII) form a helical membrane-spanning segment. Over 198 to 254 (KKAGVRREEAMKNFFEILNTNLNNFKFIKLKTKEDGVLSLFKAQSEAFSKANITNES) the chain is Cytoplasmic. A helical transmembrane segment spans residues 255 to 276 (VAAVPRIYLEGIGFCVLVFIVV). The Extracellular segment spans residues 277-292 (FLVLKNESDISGILST). The chain crosses the membrane as a helical span at residues 293–314 (ISIFVLALYRLMPSANRIITSY). The Cytoplasmic segment spans residues 315–564 (HDLLYYHSSL…LEHGKLKEEK (250 aa)). The region spanning 349-564 (LKICNLSFGY…LEHGKLKEEK (216 aa)) is the ABC transporter domain. Residue 382-389 (GESGCGKS) coordinates ATP.

Belongs to the ABC transporter superfamily. In terms of assembly, homodimer; domain-swapped. Helices that arise in transmembrane regions 4 and 5 from one subunit cross over and contact the nucleotide-binding domain from the other subunit.

It localises to the cell inner membrane. The enzyme catalyses ATP + H2O + lipopolysaccharideSide 1 = ADP + phosphate + lipopolysaccharideSide 2.. Its pathway is protein modification; protein glycosylation. Mediates the ATP-dependent translocation of the undecaprenylpyrophosphate-linked heptasaccharide intermediate across the cell membrane; this is an essential step during the N-linked protein glycosylation pathway. Transport across the membrane is effected via ATP-driven conformation changes. Most likely, only the polar and charged part of the glycolipid enter the substrate-binding cavity, and the lipid tail remains exposed to the membrane lipids during the transmembrane flipping process. The sequence is that of Protein glycosylation K (pglK) from Campylobacter jejuni subsp. jejuni serotype O:2 (strain ATCC 700819 / NCTC 11168).